Reading from the N-terminus, the 188-residue chain is Protease-associated domain-containing protein 1 (188 aa).

The N-terminal stretch at 1–21 is a signal peptide; the sequence is MVPGAAGWCCLVLWLPACVAA. One can recognise a PA domain in the interval 83–163; it reads IQDQIALVER…RSLEQHGLPW (81 aa). N-linked (GlcNAc...) asparagine glycosylation is present at asparagine 171.

In terms of processing, N-glycosylated; required for efficient secretion. In terms of tissue distribution, highly expressed in skeletal muscle, heart and liver. Expressed at intermediate level in kidney.

The protein resides in the secreted. Functionally, plays a role in the modulation of physical activity and adiposity. The sequence is that of Protease-associated domain-containing protein 1 from Homo sapiens (Human).